Here is a 128-residue protein sequence, read N- to C-terminus: Sirohydrochlorin cobaltochelatase (128 aa).

His-9 serves as the catalytic Proton acceptor. His-9 contacts Co(2+). Substrate is bound by residues Lys-43 and Phe-68–His-73. His-73 serves as a coordination point for Co(2+).

This sequence belongs to the CbiX family. CbiXS subfamily. In terms of assembly, homotetramer; dimer of dimers.

The enzyme catalyses Co-sirohydrochlorin + 2 H(+) = sirohydrochlorin + Co(2+). The protein operates within cofactor biosynthesis; adenosylcobalamin biosynthesis; cob(II)yrinate a,c-diamide from sirohydrochlorin (anaerobic route): step 1/10. Functionally, catalyzes the insertion of Co(2+) into sirohydrochlorin as part of the anaerobic pathway to cobalamin biosynthesis. In Saccharolobus islandicus (strain Y.N.15.51 / Yellowstone #2) (Sulfolobus islandicus), this protein is Sirohydrochlorin cobaltochelatase.